Reading from the N-terminus, the 506-residue chain is Galactose/methyl galactoside import ATP-binding protein MglA (506 aa).

2 consecutive ABC transporter domains span residues 14 to 249 and 264 to 506; these read LEMS…VGRS and VILE…SLHL. 46–53 provides a ligand contact to ATP; it reads GENGAGKS.

This sequence belongs to the ABC transporter superfamily. Galactose/methyl galactoside importer (TC 3.A.1.2.3) family. As to quaternary structure, the complex is composed of one ATP-binding protein (MglA), two transmembrane proteins (MglC) and a solute-binding protein (MglB).

The protein resides in the cell inner membrane. The enzyme catalyses D-galactose(out) + ATP + H2O = D-galactose(in) + ADP + phosphate + H(+). It carries out the reaction methyl beta-D-galactoside(out) + ATP + H2O = methyl beta-D-galactoside(in) + ADP + phosphate + H(+). Part of the ABC transporter complex MglABC involved in galactose/methyl galactoside import. Responsible for energy coupling to the transport system. In Escherichia coli O6:K15:H31 (strain 536 / UPEC), this protein is Galactose/methyl galactoside import ATP-binding protein MglA.